The following is a 72-amino-acid chain: Translation initiation factor IF-1 (72 aa).

An S1-like domain is found at 1 to 72 (MSKEELLEFP…TKGRITYRFK (72 aa)).

The protein belongs to the IF-1 family. In terms of assembly, component of the 30S ribosomal translation pre-initiation complex which assembles on the 30S ribosome in the order IF-2 and IF-3, IF-1 and N-formylmethionyl-tRNA(fMet); mRNA recruitment can occur at any time during PIC assembly.

The protein resides in the cytoplasm. Its function is as follows. One of the essential components for the initiation of protein synthesis. Stabilizes the binding of IF-2 and IF-3 on the 30S subunit to which N-formylmethionyl-tRNA(fMet) subsequently binds. Helps modulate mRNA selection, yielding the 30S pre-initiation complex (PIC). Upon addition of the 50S ribosomal subunit IF-1, IF-2 and IF-3 are released leaving the mature 70S translation initiation complex. The sequence is that of Translation initiation factor IF-1 from Parvibaculum lavamentivorans (strain DS-1 / DSM 13023 / NCIMB 13966).